A 104-amino-acid chain; its full sequence is A-type ATP synthase subunit F (104 aa).

It belongs to the V-ATPase F subunit family. Has multiple subunits with at least A(3), B(3), C, D, E, F, H, I and proteolipid K(x).

The protein resides in the cell membrane. Its function is as follows. Component of the A-type ATP synthase that produces ATP from ADP in the presence of a proton gradient across the membrane. The polypeptide is A-type ATP synthase subunit F (Thermoplasma volcanium (strain ATCC 51530 / DSM 4299 / JCM 9571 / NBRC 15438 / GSS1)).